The chain runs to 405 residues: MAVGLGPLPALHPVPGFELGISSAGIKRPGRKDVVVMRCAEGSSVAGVFTLNAFCAAPVILAKQRVQGTVRYLLTNTGNANAGTGEPGLAAARRTCEKLAQLTGVDASAVLPYSTGVIGEPLPVEKIEGALQAAIDDLSVDNWAAAATGIMTTDTLPKGTSRQFSHDGVTVTVTGISKGAGMIRPNMATMLGYIATDAKVAQSVLQDLIRDGANKSFNRITIDGDTSTNDCCMLIATGQADLPEITEAKGPLFEALKKAVFDVCMEVAQAIVRDGEGATKFVTVEVNGGGNHQECLDVGYAVAHSPLIKTALFASDPNWGRILAAVGRAGVPDLDVSKIDVFLGGVCIASQGCRATTYTEEQGSAVMAEEEITIRIELGRGDCSETIWTTDLSHEYVKINAEYRT.

Residues Thr152, Lys178, Thr189, Glu276, Asn400, and Thr405 each contribute to the substrate site. Thr189 (nucleophile) is an active-site residue.

This sequence belongs to the ArgJ family. As to quaternary structure, heterotetramer of two alpha and two beta chains.

The protein resides in the cytoplasm. It catalyses the reaction N(2)-acetyl-L-ornithine + L-glutamate = N-acetyl-L-glutamate + L-ornithine. It carries out the reaction L-glutamate + acetyl-CoA = N-acetyl-L-glutamate + CoA + H(+). The protein operates within amino-acid biosynthesis; L-arginine biosynthesis; L-ornithine and N-acetyl-L-glutamate from L-glutamate and N(2)-acetyl-L-ornithine (cyclic): step 1/1. It functions in the pathway amino-acid biosynthesis; L-arginine biosynthesis; N(2)-acetyl-L-ornithine from L-glutamate: step 1/4. Its function is as follows. Catalyzes two activities which are involved in the cyclic version of arginine biosynthesis: the synthesis of N-acetylglutamate from glutamate and acetyl-CoA as the acetyl donor, and of ornithine by transacetylation between N(2)-acetylornithine and glutamate. The sequence is that of Arginine biosynthesis bifunctional protein ArgJ from Pseudomonas syringae pv. syringae (strain B728a).